The sequence spans 198 residues: Ion-translocating oxidoreductase complex subunit B (198 aa).

Positions 1–28 (MIITTVYFILVAIAVLALIFGAILGFAS) are hydrophobic. The region spanning 34 to 92 (EADPIVEKIDALLPQSQCGQCGYPGCKPYAEAIANGDDITKCIPGGQTVIVNIAELMGV) is the 4Fe-4S domain. [4Fe-4S] cluster contacts are provided by Cys-51, Cys-54, Cys-59, Cys-75, Cys-115, Cys-118, Cys-121, Cys-125, Cys-145, Cys-148, Cys-151, and Cys-155. 4Fe-4S ferredoxin-type domains are found at residues 106–135 (MVAF…GTNK) and 136–165 (AMHT…MIKV).

It belongs to the 4Fe4S bacterial-type ferredoxin family. RnfB subfamily. In terms of assembly, the complex is composed of six subunits: RnfA, RnfB, RnfC, RnfD, RnfE and RnfG. The cofactor is [4Fe-4S] cluster.

It is found in the cell inner membrane. In terms of biological role, part of a membrane-bound complex that couples electron transfer with translocation of ions across the membrane. The polypeptide is Ion-translocating oxidoreductase complex subunit B (Pasteurella multocida (strain Pm70)).